The primary structure comprises 773 residues: MKIEENMELPVILVTSGVLLPGASLKIPIRSKLNIQTIEKYLTRSSNDNYVVIAYKVSTDKVYEVATIAYVEKLFGWTFNSTVHYSLDVIGLHRANIDKLSLPTCIVSKVVDLNEAISNQNAIEKLVTGAKIIASNSLTDKFSREIYSLIDEKEYGKLADLCVSQMKFLGFMQLLEFLGANGTDARVEMCIKWMNEKKDANTLKLKVPNSLEASFPVDGKKRKIPNVKNQVEQLEEKLNAIEFSDEVSDRVYSELHRLKSMNAQQSEYNILMNWLELVSSLPWNTSTIDDIELHKARTILTESHEAMDDVKERVLEHLAVCKMNNSVKGMILCFTGPPGIGKTSIAKAIAESMGRKFQRVSLGGIRDESDIRGHRRTYVAAMPGRIIEALKTCKTNNPVFLLDEVDKLYSGNQGSPSAALLELLDPEQNSTFHDHYLNIPFDVSKIMFIATANDIDRLEPALRDRLEIIEMSGYSLKEKVKICENHLLTRQLTKHCISHDYVKLERQAIVAMIEEYTMEAGVRQLERNVGAICRNVALRLAEALNSDPGADVLPVMELPIQISASNIHKILKNKHMKRVKIVEKMRPLPAGVCFGLSVTTIGGRVMPIEASKSKGTGKIVTTGHLGKVLKESILVAKGWLSANSERLGLGTLEDQDIHVHLPAGAVNKDGPSAGTGLACALVSLATNIPLRSDAAVTGEISLTGHVLPIGGVKEKVLAAQREGLRRVVLPKSNEEEYLKMDEDIRLEMDVVLAETIEDVIGAMMDKSPVLAKL.

One can recognise a Lon N-terminal domain in the interval 9–198; the sequence is LPVILVTSGV…MCIKWMNEKK (190 aa). ATP is bound at residue 336-343; sequence GPPGIGKT. The Lon proteolytic domain occupies 587–766; the sequence is PLPAGVCFGL…EDVIGAMMDK (180 aa). Active-site residues include Ser-672 and Lys-715. Positions 771 to 773 match the Microbody targeting signal motif; that stretch reads AKL.

It belongs to the peptidase S16 family.

The protein resides in the peroxisome matrix. The enzyme catalyses Hydrolysis of proteins in presence of ATP.. Its function is as follows. ATP-dependent serine protease that mediates the selective degradation of misfolded and unassembled polypeptides in the peroxisomal matrix. Necessary for type 2 peroxisome targeting signal (PTS2)-containing protein processing and facilitates peroxisome matrix protein import. The polypeptide is Lon protease homolog 2, peroxisomal (Caenorhabditis elegans).